The sequence spans 721 residues: Catalase-peroxidase (721 aa).

Positions 95–223 (WHSAGSYRLF…LGAVHMGLIY (129 aa)) form a cross-link, tryptophyl-tyrosyl-methioninium (Trp-Tyr) (with M-249). The active-site Proton acceptor is His96. Positions 223–249 (YVNPQGRDGKPDPLKSAHDVRVTFKRM) form a cross-link, tryptophyl-tyrosyl-methioninium (Tyr-Met) (with W-95). His264 contributes to the heme b binding site.

It belongs to the peroxidase family. Peroxidase/catalase subfamily. In terms of assembly, homodimer or homotetramer. Heme b is required as a cofactor. Formation of the three residue Trp-Tyr-Met cross-link is important for the catalase, but not the peroxidase activity of the enzyme.

It carries out the reaction H2O2 + AH2 = A + 2 H2O. The catalysed reaction is 2 H2O2 = O2 + 2 H2O. Bifunctional enzyme with both catalase and broad-spectrum peroxidase activity. The polypeptide is Catalase-peroxidase (Parvibaculum lavamentivorans (strain DS-1 / DSM 13023 / NCIMB 13966)).